The following is a 311-amino-acid chain: tRNA-cytidine(32) 2-sulfurtransferase (311 aa).

A PP-loop motif motif is present at residues 47 to 52; the sequence is SGGKDS. Cys122, Cys125, and Cys213 together coordinate [4Fe-4S] cluster.

The protein belongs to the TtcA family. As to quaternary structure, homodimer. Mg(2+) serves as cofactor. Requires [4Fe-4S] cluster as cofactor.

It is found in the cytoplasm. It carries out the reaction cytidine(32) in tRNA + S-sulfanyl-L-cysteinyl-[cysteine desulfurase] + AH2 + ATP = 2-thiocytidine(32) in tRNA + L-cysteinyl-[cysteine desulfurase] + A + AMP + diphosphate + H(+). It functions in the pathway tRNA modification. Catalyzes the ATP-dependent 2-thiolation of cytidine in position 32 of tRNA, to form 2-thiocytidine (s(2)C32). The sulfur atoms are provided by the cysteine/cysteine desulfurase (IscS) system. This chain is tRNA-cytidine(32) 2-sulfurtransferase, found in Escherichia coli O157:H7.